The primary structure comprises 368 residues: Leu/Ile/Val-binding protein homolog 3 (368 aa).

The N-terminal stretch at 1–23 is a signal peptide; that stretch reads MNLKLLSSVAFAATIGFASAAYA.

Belongs to the leucine-binding protein family.

Functionally, component of an amino-acid transport system. The sequence is that of Leu/Ile/Val-binding protein homolog 3 from Brucella melitensis biotype 1 (strain ATCC 23456 / CCUG 17765 / NCTC 10094 / 16M).